The following is a 283-amino-acid chain: Protein boule-like (283 aa).

Positions 1 to 25 are disordered; that stretch reads MQTDSLSPSPNPVSPVPLNNPTSAP. The RRM domain occupies 33-110; it reads NRIFVGGIDF…KKLNIGPAIR (78 aa). The DAZ domain occupies 160–184; it reads PSRSVCSSPVMVAQPIYQQPAYHYQ.

The protein belongs to the RRM DAZ family. As to quaternary structure, interacts with DAZ1 and DAZL. In terms of tissue distribution, testis specific. Not expressed in early embryos, primordial germ cells and spermatogonial cells. First expressed in the cytoplasm of spermatocytes and then persists through meiosis.

Its subcellular location is the cytoplasm. Its function is as follows. Probable RNA-binding protein, which may be required during spermatogenesis. May act by binding to the 3'-UTR of mRNAs and regulating their translation. This Homo sapiens (Human) protein is Protein boule-like (BOLL).